The following is a 166-amino-acid chain: HTH-type transcriptional regulator PrsX (166 aa).

An HTH marR-type domain is found at 25–159; that stretch reads EHLLMQLCIR…FEVINKKLLA (135 aa).

The protein localises to the cytoplasm. In Escherichia coli O6:H1 (strain CFT073 / ATCC 700928 / UPEC), this protein is HTH-type transcriptional regulator PrsX (prsX).